A 347-amino-acid polypeptide reads, in one-letter code: MKPAILITITSTVVLGTMIVLFSSHWFMIWVGFEMNMLAIIPILMKKYNPRAMEASTKYFLTQATASMLLMLSIIINLLCSGHWTVSTIPNPVASTMITIALTMKLGLSPFHFWVPEVTQGISLSSGMILLTWQKIAPLSILYQISPSVNSNLLLMMAITSMLVGGWGGLNQTQLRKILAYSSITHMGWMAAIMVYNPTLAILNLTIYIMMTLGTFMLFMHSSSTTTLSLSYTWNKFPLMAPLILMLMLSLGGLPPLSGFIPKWMIIQELTKNDMIIMPTLMAITALLNLYFYTRLTYTTALTMFPATNNMKMKWQFETTKKTTLLAPLIVTSTMLLPLTPMLAALD.

Helical transmembrane passes span 5–22 (ILITITSTVVLGTMIVLF), 26–45 (WFMIWVGFEMNMLAIIPILM), 60–80 (FLTQATASMLLMLSIIINLLC), 96–116 (TMITIALTMKLGLSPFHFWVP), 122–142 (ISLSSGMILLTWQKIAPLSIL), 153–173 (LLLMMAITSMLVGGWGGLNQT), 178–198 (ILAYSSITHMGWMAAIMVYNP), 200–220 (LAILNLTIYIMMTLGTFMLFM), 237–257 (FPLMAPLILMLMLSLGGLPPL), 274–294 (DMIIMPTLMAITALLNLYFYT), and 325–345 (LLAPLIVTSTMLLPLTPMLAA).

Belongs to the complex I subunit 2 family. In terms of assembly, core subunit of respiratory chain NADH dehydrogenase (Complex I) which is composed of 45 different subunits. Interacts with TMEM242.

It localises to the mitochondrion inner membrane. It catalyses the reaction a ubiquinone + NADH + 5 H(+)(in) = a ubiquinol + NAD(+) + 4 H(+)(out). In terms of biological role, core subunit of the mitochondrial membrane respiratory chain NADH dehydrogenase (Complex I) which catalyzes electron transfer from NADH through the respiratory chain, using ubiquinone as an electron acceptor. Essential for the catalytic activity and assembly of complex I. The sequence is that of NADH-ubiquinone oxidoreductase chain 2 from Ailuropoda melanoleuca (Giant panda).